A 112-amino-acid chain; its full sequence is UPF0122 protein CPF_1968 (112 aa).

Belongs to the UPF0122 family.

In terms of biological role, might take part in the signal recognition particle (SRP) pathway. This is inferred from the conservation of its genetic proximity to ftsY/ffh. May be a regulatory protein. In Clostridium perfringens (strain ATCC 13124 / DSM 756 / JCM 1290 / NCIMB 6125 / NCTC 8237 / Type A), this protein is UPF0122 protein CPF_1968.